A 174-amino-acid chain; its full sequence is Large ribosomal subunit protein uL15 (174 aa).

Disordered regions lie at residues 1–57 (MKLH…QMRI) and 147–174 (PWVV…PQKA). A compositionally biased stretch (gly residues) spans 21–35 (RGIGSGKGKTGGKGM).

The protein belongs to the universal ribosomal protein uL15 family. As to quaternary structure, part of the 50S ribosomal subunit.

Its function is as follows. Binds to the 23S rRNA. The protein is Large ribosomal subunit protein uL15 of Roseiflexus sp. (strain RS-1).